We begin with the raw amino-acid sequence, 529 residues long: Protein PNS1 (529 aa).

The interval 1–58 (MSQQYSYGGGGGAGYPPPQMQPPNSYAQANYQGQPQGAQNQYYNGQQPHHNAPQQYYG) is disordered. The Cytoplasmic segment spans residues 1-84 (MSQQYSYGGG…LQPKPKFRDP (84 aa)). Residues 22-48 (PPNSYAQANYQGQPQGAQNQYYNGQQP) are compositionally biased toward low complexity. Residues 85-105 (IFLVLFLLVFAGFIALSVICL) form a helical membrane-spanning segment. At 106 to 132 (RSYSNADVNVSIGRANVAGSTLNGHTA) the chain is on the extracellular side. N-linked (GlcNAc...) asparagine glycosylation occurs at N114. Residues 133–153 (IMFMICCAVALVLSFVYILLV) form a helical membrane-spanning segment. Topologically, residues 154–158 (RTFPK) are cytoplasmic. Residues 159–179 (IILEATLLLTTLSNVAFCVYL) traverse the membrane as a helical segment. Over 180–184 (WVRGN) the chain is Extracellular. Residues 185–205 (TAAAIIFTIFAVLSVIAYFFM) form a helical membrane-spanning segment. Residues 206–230 (RKRIPLAKLILVTVIRTAEQYKSVY) lie on the Cytoplasmic side of the membrane. The helical transmembrane segment at 231-251 (VVALGGLIVETAFSAWTSWVV) threads the bilayer. The Extracellular portion of the chain corresponds to 252–271 (VAAYQRFEPSGQAAGSSSSN). An N-linked (GlcNAc...) asparagine glycan is attached at N271. Residues 272–292 (ASIIGIMVFIVFAYYWISEVI) traverse the membrane as a helical segment. Over 293–294 (KN) the chain is Cytoplasmic. A helical transmembrane segment spans residues 295–315 (IAFTTVAGIFGVAYYNANKVA). At 316-325 (NAAWGAFRRS) the chain is on the extracellular side. A helical transmembrane segment spans residues 326 to 346 (MTYSLGSICFGSLIVAILDLL). Residues 347-362 (RALFNILQSQAASDGD) lie on the Cytoplasmic side of the membrane. The helical transmembrane segment at 363 to 383 (MTGQILACVAGCCVSCIQGLV) threads the bilayer. Residues 384–427 (DYFNRYAYINIALYGNGYITAAKETWALLKDRGIDAIINDSLVN) lie on the Extracellular side of the membrane. The N-linked (GlcNAc...) asparagine glycan is linked to N422. Residues 428-448 (IVFNCGAFIIGLLTALFAFIY) form a helical membrane-spanning segment. At 449-464 (EQLTNPRYLQNDAGYY) the chain is on the cytoplasmic side. A helical membrane pass occupies residues 465–485 (SIVLLVAFGLGFNIALSVGAG). Topologically, residues 486 to 529 (SIASGVSTYFVALAEDPYILQGKNPELFEMIRQQYPQVVQGVNH) are extracellular.

This sequence belongs to the CTL (choline transporter-like) family.

It localises to the cell membrane. Its function is as follows. Probably involved in transport through the plasma membrane. The protein is Protein PNS1 (PNS1) of Mycosarcoma maydis (Corn smut fungus).